The chain runs to 706 residues: Solute carrier organic anion transporter family member 6C1 (706 aa).

The disordered stretch occupies residues methionine 1–lysine 24. Residues methionine 1 to aspartate 94 are Cytoplasmic-facing. A compositionally biased stretch (basic and acidic residues) spans lysine 7–lysine 24. Residues glycine 95–leucine 118 form a helical membrane-spanning segment. The Extracellular portion of the chain corresponds to asparagine 119–threonine 130. Residues glutamate 131–alanine 151 traverse the membrane as a helical segment. Residues histidine 152 to arginine 159 are Cytoplasmic-facing. A helical membrane pass occupies residues threonine 160–proline 180. Residues phenylalanine 181–cysteine 218 lie on the Extracellular side of the membrane. Residue asparagine 214 is glycosylated (N-linked (GlcNAc...) asparagine). The helical transmembrane segment at isoleucine 219 to isoleucine 241 threads the bilayer. The Cytoplasmic portion of the chain corresponds to threonine 242–cysteine 253. A helical membrane pass occupies residues glycine 254–glutamine 277. Residues asparagine 278–serine 301 are Extracellular-facing. A helical transmembrane segment spans residues glycine 302–phenylalanine 324. Topologically, residues proline 325 to methionine 374 are cytoplasmic. Residues leucine 375 to proline 396 form a helical membrane-spanning segment. At histidine 397 to alanine 410 the chain is on the extracellular side. Residues serine 411–isoleucine 432 form a helical membrane-spanning segment. At valine 433–lysine 445 the chain is on the cytoplasmic side. The chain crosses the membrane as a helical span at residues phenylalanine 446 to cysteine 466. Residues glutamine 467–leucine 565 are Extracellular-facing. The region spanning glycine 485–lysine 540 is the Kazal-like domain. Asparagine 486 carries an N-linked (GlcNAc...) asparagine glycan. Intrachain disulfides connect cysteine 491/cysteine 521, cysteine 497/cysteine 517, and cysteine 506/cysteine 538. N-linked (GlcNAc...) asparagine glycosylation is present at asparagine 535. Residues lysine 566 to isoleucine 589 form a helical membrane-spanning segment. Residues serine 590–serine 604 lie on the Cytoplasmic side of the membrane. A helical membrane pass occupies residues leucine 605 to phenylalanine 624. Over arginine 625–asparagine 652 the chain is Extracellular. The chain crosses the membrane as a helical span at residues isoleucine 653 to tyrosine 675. The Cytoplasmic portion of the chain corresponds to alanine 676 to alanine 706.

It belongs to the organo anion transporter (TC 2.A.60) family. Component of the CatSper complex or CatSpermasome composed of the core pore-forming members CATSPER1, CATSPER2, CATSPER3 and CATSPER4 as well as auxiliary members CATSPERB, CATSPERG2, CATSPERD, CATSPERE, CATSPERZ, C2CD6/CATSPERT, SLCO6C1, TMEM249, TMEM262 and EFCAB9. HSPA1 may be an additional auxiliary complex member. The core complex members CATSPER1, CATSPER2, CATSPER3 and CATSPER4 form a heterotetrameric channel. The auxiliary CATSPERB, CATSPERG2, CATSPERD and CATSPERE subunits form a pavilion-like structure over the pore which stabilizes the complex through interactions with CATSPER4, CATSPER3, CATSPER1 and CATSPER2 respectively. SLCO6C1 interacts with CATSPERE and TMEM262/CATSPERH interacts with CATSPERB, further stabilizing the complex. C2CD6/CATSPERT interacts at least with CATSPERD and is required for targeting the CatSper complex in the flagellar membrane.

It is found in the cell projection. The protein resides in the cilium. It localises to the flagellum membrane. Functionally, auxiliary component of the CatSper complex, a complex involved in sperm cell hyperactivation. The chain is Solute carrier organic anion transporter family member 6C1 from Mus musculus (Mouse).